Here is an 83-residue protein sequence, read N- to C-terminus: ATP synthase subunit c (83 aa).

Helical transmembrane passes span 10–30 and 52–72; these read IAVALLIGMGALGTAIGFGLL and MFIVAGLLDAVTMIGVGIALY.

This sequence belongs to the ATPase C chain family. In terms of assembly, F-type ATPases have 2 components, F(1) - the catalytic core - and F(0) - the membrane proton channel. F(1) has five subunits: alpha(3), beta(3), gamma(1), delta(1), epsilon(1). F(0) has three main subunits: a(1), b(2) and c(10-14). The alpha and beta chains form an alternating ring which encloses part of the gamma chain. F(1) is attached to F(0) by a central stalk formed by the gamma and epsilon chains, while a peripheral stalk is formed by the delta and b chains.

It is found in the cell inner membrane. F(1)F(0) ATP synthase produces ATP from ADP in the presence of a proton or sodium gradient. F-type ATPases consist of two structural domains, F(1) containing the extramembraneous catalytic core and F(0) containing the membrane proton channel, linked together by a central stalk and a peripheral stalk. During catalysis, ATP synthesis in the catalytic domain of F(1) is coupled via a rotary mechanism of the central stalk subunits to proton translocation. Functionally, key component of the F(0) channel; it plays a direct role in translocation across the membrane. A homomeric c-ring of between 10-14 subunits forms the central stalk rotor element with the F(1) delta and epsilon subunits. The chain is ATP synthase subunit c from Shewanella amazonensis (strain ATCC BAA-1098 / SB2B).